The chain runs to 760 residues: Alpha-amylase (760 aa).

The N-terminal stretch at 1–34 is a signal peptide; that stretch reads MSKRSKLLKRRMLSLSVICVLIGYGPVFNPVRSQ. Ca(2+) is bound by residues Asn-143, Thr-184, and Asp-192. Asp-222 functions as the Nucleophile in the catalytic mechanism. Ca(2+) is bound at residue His-226. The Proton donor role is filled by Glu-262.

Belongs to the glycosyl hydrolase 13 family. Monomer. Requires Ca(2+) as cofactor.

The catalysed reaction is Endohydrolysis of (1-&gt;4)-alpha-D-glucosidic linkages in polysaccharides containing three or more (1-&gt;4)-alpha-linked D-glucose units.. In Clostridium acetobutylicum (strain ATCC 824 / DSM 792 / JCM 1419 / IAM 19013 / LMG 5710 / NBRC 13948 / NRRL B-527 / VKM B-1787 / 2291 / W), this protein is Alpha-amylase (amyA).